The primary structure comprises 1146 residues: uncharacterized protein (1146 aa).

This is an uncharacterized protein from Saccharum officinarum (Sugarcane).